The primary structure comprises 72 residues: MENGEILLTSWLNRSVHIEIFDERKFIGKFLCTDREGAAILSNTTEYNKGFSRALGLVVIPGKHIKSFSVRA.

The 70-residue stretch at 3-72 (NGEILLTSWL…KHIKSFSVRA (70 aa)) folds into the Sm domain.

As to quaternary structure, component of the N-terminal acetyltransferase C (NatC) complex, composed of the catalytic subunit Naa30, a large auxiliary subunit Naa35 and a small auxiliary subunit Naa38.

The protein localises to the endoplasmic reticulum. Component of the NatC N-terminal acetyltransferase, which associates with the ribosome to acetylate nascent protein chains in a cotranslational manner. NatC acetylates protein N-termini starting with methionine, followed by a hydrophobic or amphipathic amino acid, with amino acids at positions 3 and 4 also contributing to NatC recognition. The first 4 amino acids of cognate substrates are recognized at the Naa30-Naa35 interface. NatC-dependent acetylation targets various substrate proteins to specific subcellular sites. The sequence is that of N-alpha-acetyltransferase 38, NatC auxiliary subunit (naa38) from Schizosaccharomyces pombe (strain 972 / ATCC 24843) (Fission yeast).